A 365-amino-acid polypeptide reads, in one-letter code: Mitogen-activated protein kinase HOG1A (365 aa).

The Protein kinase domain maps to 24-303 (YTDLQPVGMG…AADALAHPYL (280 aa)). ATP-binding positions include 30-38 (VGMGAFGLL) and Lys53. Asp145 (proton acceptor) is an active-site residue. A Phosphothreonine modification is found at Thr175. The short motif at 175-177 (TGY) is the TXY element. Residue Tyr177 is modified to Phosphotyrosine.

This sequence belongs to the protein kinase superfamily. Ser/Thr protein kinase family. MAP kinase subfamily. HOG1 sub-subfamily. The cofactor is Mg(2+). In terms of processing, phosphorylated. Dually phosphorylated on Thr-175 and Tyr-177, which activates the enzyme. Rapidly dephosphorylated upon either hypo- or hyperosmotic shock.

The protein localises to the cytoplasm. Its subcellular location is the nucleus. It catalyses the reaction L-seryl-[protein] + ATP = O-phospho-L-seryl-[protein] + ADP + H(+). The enzyme catalyses L-threonyl-[protein] + ATP = O-phospho-L-threonyl-[protein] + ADP + H(+). Its activity is regulated as follows. Activated by tyrosine and threonine phosphorylation. In terms of biological role, proline-directed serine/threonine-protein kinase involved in a signal transduction pathway that is activated by changes in the osmolarity of the extracellular environment. Controls osmotic regulation of transcription of target genes. The protein is Mitogen-activated protein kinase HOG1A (HOG1A) of Wallemia ichthyophaga (strain EXF-994 / CBS 113033).